Reading from the N-terminus, the 325-residue chain is Adenine deaminase (325 aa).

3 residues coordinate Zn(2+): histidine 11, histidine 13, and histidine 189. The active-site Proton donor is the glutamate 192. Residue aspartate 270 participates in Zn(2+) binding. Aspartate 271 lines the substrate pocket.

Belongs to the metallo-dependent hydrolases superfamily. Adenosine and AMP deaminases family. Adenine deaminase type 2 subfamily. Requires Zn(2+) as cofactor.

The catalysed reaction is adenine + H2O + H(+) = hypoxanthine + NH4(+). Catalyzes the hydrolytic deamination of adenine to hypoxanthine. Plays an important role in the purine salvage pathway and in nitrogen catabolism. In Agrobacterium fabrum (strain C58 / ATCC 33970) (Agrobacterium tumefaciens (strain C58)), this protein is Adenine deaminase.